A 196-amino-acid polypeptide reads, in one-letter code: Protein TEX261 (196 aa).

5 consecutive transmembrane segments (helical) span residues 3 to 23 (FMYV…TLAV), 42 to 62 (SRII…LYVF), 70 to 90 (IGVG…FPFI), 97 to 117 (FILS…FFAE), and 125 to 145 (VLAY…VSLS).

This sequence belongs to the SVP26 family. In terms of tissue distribution, detected in testis.

The protein resides in the membrane. This chain is Protein TEX261 (Tex261), found in Mus musculus (Mouse).